We begin with the raw amino-acid sequence, 231 residues long: Sugar fermentation stimulation protein homolog (231 aa).

This sequence belongs to the SfsA family.

The sequence is that of Sugar fermentation stimulation protein homolog from Syntrophotalea carbinolica (strain DSM 2380 / NBRC 103641 / GraBd1) (Pelobacter carbinolicus).